We begin with the raw amino-acid sequence, 146 residues long: Ribosome-binding factor A (146 aa).

The interval 122–146 (QQQFGSVDDVTENDIDEADDTEGKA) is disordered. Residues 130 to 146 (DVTENDIDEADDTEGKA) are compositionally biased toward acidic residues.

Belongs to the RbfA family. Monomer. Binds 30S ribosomal subunits, but not 50S ribosomal subunits or 70S ribosomes.

It is found in the cytoplasm. In terms of biological role, one of several proteins that assist in the late maturation steps of the functional core of the 30S ribosomal subunit. Associates with free 30S ribosomal subunits (but not with 30S subunits that are part of 70S ribosomes or polysomes). Required for efficient processing of 16S rRNA. May interact with the 5'-terminal helix region of 16S rRNA. In Shewanella sp. (strain MR-7), this protein is Ribosome-binding factor A.